We begin with the raw amino-acid sequence, 261 residues long: Oxidoreductase ptaF (261 aa).

This sequence belongs to the avfA family.

It participates in secondary metabolite biosynthesis. Functionally, oxidoreductase; part of the gene cluster that mediates the biosynthesis of pestheic acid, a diphenyl ether which is a biosynthetic precursor of the unique chloropupukeananes. The biosynthesis initiates from condensation of acetate and malonate units catalyzed by the non-reducing PKS ptaA. As the ptaA protein is TE/CLC domain-deficient, hydrolysis and Claisen cyclization of the polyketide could be catalyzed by ptaB containing a beta-lactamase domain. The ptaB protein might hydrolyze the thioester bond between the ACP of ptaA and the intermediate to release atrochrysone carboxylic acid, which is spontaneously dehydrated to form endocrocin anthrone. Endocrocin anthrone is then converted to endocrocin, catalyzed by the anthrone oxygenase ptaC. Spontaneous decarboxylation of endocrocin occurs to generate emodin. An O-methyltransferase (ptaH or ptaI) could methylate emodin to form physcion. PtaJ could then catalyze the oxidative cleavage of physcion, and rotation of the intermediate could then afford desmethylisosulochrin. PtaF, a putative NADH-dependent oxidoreductase, might also participate in the oxidative cleavage step. Desmethylisosulochrin is then transformed by another O-methyltransferase (ptaH or ptaI) to form isosulochrin. Chlorination of isosulochrin by ptaM in the cyclohexadienone B ring then produces chloroisosulochrin. PtaE is responsible for the oxidative coupling reactions of both benzophenones isosulouchrin and chloroisosulochrin to RES-1214-1 and pestheic acid respectively, regardless of chlorination. The protein is Oxidoreductase ptaF of Pestalotiopsis fici (strain W106-1 / CGMCC3.15140).